A 598-amino-acid chain; its full sequence is MLELWGVLSLTSLGVMVIFLFSKIKSSFAESVKYAGYMNAVLLSILLMSDESEMLFLKWEWVKLGGYSLMISFRFDLYTCCFFVVGLYVTWNILMFSFYYMSTDPRIDLFCKYLGLFLIAMLLLVSAESLFQLLIGWEGVGIMSYLLISWWYARSDANTAALQAIFYNRVGDIGLLIMLMWSLVTLGDWSFTGLYALDFVNTFFLLGVVLAAAGKSAQLGLHPWLPAAMEGPTPVSSLLHSSTMVVAGVFLLIRFSPIILNHKEIQLMVFFLGTMTTLFSAICALAQNDMKKVVAFSTASQLGLMVTAVGAGAPQLAFLHICMHAFFKAMLFMCSGSFIHGLQNEQDVRKMGGLYSAAPITSVCFFIGSAALMGVPFLAGFFSKDPIIEIININNLNSWAVGLVLIATSFTAAYSVRLLYFSVGGVSRMLVLQPMNEEYGNLIGPLQRLAYSSVIAGVVFIYFLSPNQISCLSLPLSLKLAAVFVTLVGGLIAWDVVNLLHREESVTNIPELAFEAQVGFYPLIMHKLIPKVWLNMGEMYQMQVMDRGWTELALPQGLGGNYKIMADNVVNAQTSLIKMYIAVMVMMGGLILGIMICL.

The next 16 membrane-spanning stretches (helical) occupy residues 1-21, 28-48, 81-101, 115-135, 171-191, 193-213, 233-253, 265-285, 293-312, 323-343, 362-382, 399-421, 454-474, 480-500, 509-529, and 576-596; these read MLELWGVLSLTSLGVMVIFLF, FAESVKYAGYMNAVLLSILLM, CFFVVGLYVTWNILMFSFYYM, GLFLIAMLLLVSAESLFQLLI, GDIGLLIMLMWSLVTLGDWSF, GLYALDFVNTFFLLGVVLAAA, TPVSSLLHSSTMVVAGVFLLI, IQLMVFFLGTMTTLFSAICAL, VVAFSTASQLGLMVTAVGAG, MHAFFKAMLFMCSGSFIHGLQ, SVCFFIGSAALMGVPFLAGFF, WAVGLVLIATSFTAAYSVRLLYF, VIAGVVFIYFLSPNQISCLSL, LAAVFVTLVGGLIAWDVVNLL, IPELAFEAQVGFYPLIMHKLI, and LIKMYIAVMVMMGGLILGIMI.

It belongs to the complex I subunit 5 family.

The protein resides in the mitochondrion inner membrane. The enzyme catalyses a ubiquinone + NADH + 5 H(+)(in) = a ubiquinol + NAD(+) + 4 H(+)(out). In terms of biological role, core subunit of the mitochondrial membrane respiratory chain NADH dehydrogenase (Complex I) that is believed to belong to the minimal assembly required for catalysis. Complex I functions in the transfer of electrons from NADH to the respiratory chain. The immediate electron acceptor for the enzyme is believed to be ubiquinone. The polypeptide is NADH-ubiquinone oxidoreductase chain 5 (ND5) (Branchiostoma lanceolatum (Common lancelet)).